The primary structure comprises 1211 residues: DNA-directed RNA polymerase subunit beta' (1211 aa).

The Zn(2+) site is built by Cys-60, Cys-62, Cys-75, and Cys-78. The Mg(2+) site is built by Asp-450, Asp-452, and Asp-454. Residues Cys-819, Cys-893, Cys-900, and Cys-903 each contribute to the Zn(2+) site.

The protein belongs to the RNA polymerase beta' chain family. The RNAP catalytic core consists of 2 alpha, 1 beta, 1 beta' and 1 omega subunit. When a sigma factor is associated with the core the holoenzyme is formed, which can initiate transcription. Mg(2+) serves as cofactor. Requires Zn(2+) as cofactor.

The catalysed reaction is RNA(n) + a ribonucleoside 5'-triphosphate = RNA(n+1) + diphosphate. DNA-dependent RNA polymerase catalyzes the transcription of DNA into RNA using the four ribonucleoside triphosphates as substrates. The chain is DNA-directed RNA polymerase subunit beta' from Streptococcus equi subsp. equi (strain 4047).